We begin with the raw amino-acid sequence, 718 residues long: Scarecrow-like protein 9 (718 aa).

Residues 305 to 338 form a disordered region; that stretch reads VEKKKASDAQGGKRRARGRGRGRGRGGGGGQNGK. Positions 316-328 are enriched in basic residues; sequence GKRRARGRGRGRG. Residues 335–713 enclose the GRAS domain; it reads QNGKKEVVDL…RTVMALSVWK (379 aa). The segment at 342 to 402 is leucine repeat I (LRI); the sequence is VDLRSLLIHC…EARLAGTGSQ (61 aa). The VHIID stretch occupies residues 421–484; sequence HQLFLACCPF…YGSPKVRITG (64 aa). Residues 452–456 carry the VHIID motif; that stretch reads VHVID. The interval 500–532 is leucine repeat II (LRII); it reads ETGQRLAAYAKLFGVPFEYKAIAKKWDAIQLED. The segment at 541–635 is PFYRE; the sequence is TVVNCLYRAE…MEVFGREALN (95 aa). The interval 638 to 713 is SAW; it reads ACEGWERVER…RTVMALSVWK (76 aa).

The protein belongs to the GRAS family. In terms of tissue distribution, expressed in cotyledons, leaves and flowers, and in the elongation zone in root.

The protein resides in the nucleus. In terms of biological role, probable transcription factor involved in plant development. This Arabidopsis thaliana (Mouse-ear cress) protein is Scarecrow-like protein 9 (SCL9).